The following is a 312-amino-acid chain: Malate dehydrogenase (312 aa).

Residues 7–13 and aspartate 34 contribute to the NAD(+) site; that span reads GAAGGIG. Residues arginine 81 and arginine 87 each coordinate substrate. Residues asparagine 94 and 117–119 each bind NAD(+); that span reads ITN. Residues asparagine 119 and arginine 153 each coordinate substrate. The active-site Proton acceptor is the histidine 177. Residue methionine 227 participates in NAD(+) binding.

It belongs to the LDH/MDH superfamily. MDH type 1 family. As to quaternary structure, homodimer.

The catalysed reaction is (S)-malate + NAD(+) = oxaloacetate + NADH + H(+). Its function is as follows. Catalyzes the reversible oxidation of malate to oxaloacetate. This Edwardsiella ictaluri (strain 93-146) protein is Malate dehydrogenase.